A 515-amino-acid chain; its full sequence is Peroxisomal catalase A (515 aa).

Position 2 is an N-acetylserine (Ser2). Catalysis depends on residues His70 and Asn143. Tyr355 is a heme binding site. A Microbody targeting signal motif is present at residues 513–515 (SKF).

It belongs to the catalase family. In terms of assembly, homotetramer. Heme serves as cofactor.

The protein localises to the peroxisome matrix. The enzyme catalyses 2 H2O2 = O2 + 2 H2O. Functionally, catalyzes the degradation of hydrogen peroxide (H(2)O(2)) generated by peroxisomal oxidases to water and oxygen, thereby protecting cells from the toxic effects of hydrogen peroxide. This is Peroxisomal catalase A (CTA1) from Saccharomyces cerevisiae (strain ATCC 204508 / S288c) (Baker's yeast).